The chain runs to 389 residues: Chalcone synthase A (389 aa).

C164 is a catalytic residue.

The protein belongs to the thiolase-like superfamily. Chalcone/stilbene synthases family. As to expression, major expressed member of the gene family in various floral tissues and in seedlings treated with UV light. It is relatively low expressed in tissue culture material.

The catalysed reaction is (E)-4-coumaroyl-CoA + 3 malonyl-CoA + 3 H(+) = 2',4,4',6'-tetrahydroxychalcone + 3 CO2 + 4 CoA. It participates in secondary metabolite biosynthesis; flavonoid biosynthesis. Functionally, the primary product of this enzyme is 4,2',4',6'-tetrahydroxychalcone (also termed naringenin-chalcone or chalcone) which can under specific conditions spontaneously isomerize into naringenin. The polypeptide is Chalcone synthase A (CHSA) (Petunia hybrida (Petunia)).